A 72-amino-acid chain; its full sequence is Translation initiation factor IF-1 (72 aa).

An S1-like domain is found at methionine 1–lysine 72.

It belongs to the IF-1 family. As to quaternary structure, component of the 30S ribosomal translation pre-initiation complex which assembles on the 30S ribosome in the order IF-2 and IF-3, IF-1 and N-formylmethionyl-tRNA(fMet); mRNA recruitment can occur at any time during PIC assembly.

It is found in the cytoplasm. Its function is as follows. One of the essential components for the initiation of protein synthesis. Stabilizes the binding of IF-2 and IF-3 on the 30S subunit to which N-formylmethionyl-tRNA(fMet) subsequently binds. Helps modulate mRNA selection, yielding the 30S pre-initiation complex (PIC). Upon addition of the 50S ribosomal subunit IF-1, IF-2 and IF-3 are released leaving the mature 70S translation initiation complex. This Alcanivorax borkumensis (strain ATCC 700651 / DSM 11573 / NCIMB 13689 / SK2) protein is Translation initiation factor IF-1.